The following is a 113-amino-acid chain: Large ribosomal subunit protein uL22 (113 aa).

Belongs to the universal ribosomal protein uL22 family. As to quaternary structure, part of the 50S ribosomal subunit.

Its function is as follows. This protein binds specifically to 23S rRNA; its binding is stimulated by other ribosomal proteins, e.g. L4, L17, and L20. It is important during the early stages of 50S assembly. It makes multiple contacts with different domains of the 23S rRNA in the assembled 50S subunit and ribosome. In terms of biological role, the globular domain of the protein is located near the polypeptide exit tunnel on the outside of the subunit, while an extended beta-hairpin is found that lines the wall of the exit tunnel in the center of the 70S ribosome. The protein is Large ribosomal subunit protein uL22 of Xylella fastidiosa (strain M12).